Consider the following 251-residue polypeptide: Ubiquinone/menaquinone biosynthesis C-methyltransferase UbiE (251 aa).

Residues threonine 74, aspartate 95, 123–124 (NA), and serine 140 contribute to the S-adenosyl-L-methionine site.

It belongs to the class I-like SAM-binding methyltransferase superfamily. MenG/UbiE family.

The catalysed reaction is a 2-demethylmenaquinol + S-adenosyl-L-methionine = a menaquinol + S-adenosyl-L-homocysteine + H(+). The enzyme catalyses a 2-methoxy-6-(all-trans-polyprenyl)benzene-1,4-diol + S-adenosyl-L-methionine = a 5-methoxy-2-methyl-3-(all-trans-polyprenyl)benzene-1,4-diol + S-adenosyl-L-homocysteine + H(+). It participates in quinol/quinone metabolism; menaquinone biosynthesis; menaquinol from 1,4-dihydroxy-2-naphthoate: step 2/2. Its pathway is cofactor biosynthesis; ubiquinone biosynthesis. Its function is as follows. Methyltransferase required for the conversion of demethylmenaquinol (DMKH2) to menaquinol (MKH2) and the conversion of 2-polyprenyl-6-methoxy-1,4-benzoquinol (DDMQH2) to 2-polyprenyl-3-methyl-6-methoxy-1,4-benzoquinol (DMQH2). In Citrobacter koseri (strain ATCC BAA-895 / CDC 4225-83 / SGSC4696), this protein is Ubiquinone/menaquinone biosynthesis C-methyltransferase UbiE.